The following is a 1190-amino-acid chain: Tight junction protein 2 (1190 aa).

At Ser-16 the chain carries Phosphoserine. The 88-residue stretch at Thr-33–Arg-120 folds into the PDZ 1 domain. A phosphoserine mark is found at Ser-130, Ser-150, Ser-153, Ser-163, Ser-168, Ser-170, Ser-174, Ser-200, Ser-220, Ser-232, Ser-244, Ser-266, Ser-325, Ser-398, Ser-400, Ser-406, Ser-415, Ser-424, Ser-430, and Ser-431. The segment at Arg-152–Ile-306 is disordered. Basic and acidic residues predominate over residues Arg-169–His-291. The PDZ 2 domain maps to Gly-307–Ser-385. The interval Ile-408 to Tyr-506 is disordered. Basic and acidic residues predominate over residues Ser-415–Pro-446. Phosphothreonine is present on Thr-455. Ser-499 bears the Phosphoserine mark. In terms of domain architecture, PDZ 3 spans Asn-509–Ser-590. Tyr-574 carries the post-translational modification Phosphotyrosine. Residues Gly-604–Ala-669 enclose the SH3 domain. The Guanylate kinase-like domain maps to Asn-678 to Gln-876. A phosphoserine mark is found at Ser-702 and Ser-902. Thr-905 is subject to Phosphothreonine. Ser-913 and Ser-920 each carry phosphoserine. 2 disordered regions span residues Ser-920 to Leu-1079 and Asn-1105 to Leu-1190. Phosphothreonine is present on residues Thr-925 and Thr-933. Basic and acidic residues predominate over residues Val-956–Pro-967. Residues Ser-966, Ser-978, Ser-986, Ser-1006, Ser-1067, and Ser-1068 each carry the phosphoserine modification. Residues Glu-994–Glu-1014 show a composition bias toward basic and acidic residues. Over residues Glu-1060–Asp-1072 the composition is skewed to acidic residues. The residue at position 1118 (Tyr-1118) is a Phosphotyrosine. Residue Thr-1131 is modified to Phosphothreonine. Phosphoserine is present on residues Ser-1147 and Ser-1159. Basic and acidic residues predominate over residues Tyr-1166–Lys-1175. The tract at residues Thr-1188–Leu-1190 is interaction with SCRIB.

Belongs to the MAGUK family. In terms of assembly, homodimer. Interacts (via PDZ2 domain) with TJP1/ZO1 (via PDZ2 domain). Interacts with OCLN. Interacts with UBN1. Interacts with SAFB in the nucleus. Interacts with SCRIB. Interacts with USP53 (via the C-terminal region). Interacts with claudins, including CLDN1, CLDN2, CLDN3, CLDN5 and CLDN7. Interacts with CLDN18. Interacts (via N-terminus) with CTNNA1. In terms of tissue distribution, this protein is found in epithelial cell junctions. Isoform A1 is abundant in the heart and brain. Detected in brain and skeletal muscle. It is present almost exclusively in normal tissues. Isoform C1 is expressed at high level in the kidney, pancreas, heart and placenta. Not detected in brain and skeletal muscle. Found in normal as well as in most neoplastic tissues.

It is found in the cell junction. Its subcellular location is the adherens junction. It localises to the cell membrane. The protein resides in the tight junction. The protein localises to the nucleus. Plays a role in tight junctions and adherens junctions. Acts as a positive regulator of RANKL-induced osteoclast differentiation, potentially via mediating downstream transcriptional activity. This Homo sapiens (Human) protein is Tight junction protein 2.